Reading from the N-terminus, the 779-residue chain is Lon protease (779 aa).

The 194-residue stretch at 10 to 203 folds into the Lon N-terminal domain; the sequence is LPLLPLRGLL…ILLTILNNER (194 aa). ATP is bound at residue 355 to 362; it reads GPPGVGKT. Residues 591–772 enclose the Lon proteolytic domain; the sequence is KDQVGSVTGL…DEVLRHALTK (182 aa). Residues Ser678 and Lys721 contribute to the active site.

It belongs to the peptidase S16 family. In terms of assembly, homohexamer. Organized in a ring with a central cavity.

It is found in the cytoplasm. It catalyses the reaction Hydrolysis of proteins in presence of ATP.. Functionally, ATP-dependent serine protease that mediates the selective degradation of mutant and abnormal proteins as well as certain short-lived regulatory proteins. Required for cellular homeostasis and for survival from DNA damage and developmental changes induced by stress. Degrades polypeptides processively to yield small peptide fragments that are 5 to 10 amino acids long. Binds to DNA in a double-stranded, site-specific manner. The protein is Lon protease of Brevibacillus choshinensis.